A 73-amino-acid chain; its full sequence is U-scoloptoxin(03)-Ssd1b (73 aa).

The N-terminal stretch at 1 to 23 (MKSSMAVLLVMGLIIFTLDKCYS) is a signal peptide.

Contains 3 disulfide bonds. Expressed by the venom gland.

It is found in the secreted. This is U-scoloptoxin(03)-Ssd1b from Scolopendra dehaani (Thai centipede).